The following is a 418-amino-acid chain: tRNA wybutosine-synthesizing protein 2 (418 aa).

Residues Ser228, Lys235, 275-276, and 302-303 contribute to the S-adenosyl-L-methionine site; these read EI and EN.

Belongs to the class I-like SAM-binding methyltransferase superfamily. TRM5/TYW2 family.

The protein resides in the cytoplasm. The protein localises to the nucleus. The catalysed reaction is 4-demethylwyosine(37) in tRNA(Phe) + S-adenosyl-L-methionine = 4-demethyl-7-[(3S)-3-amino-3-carboxypropyl]wyosine(37) in tRNA(Phe) + S-methyl-5'-thioadenosine + H(+). The protein operates within tRNA modification; wybutosine-tRNA(Phe) biosynthesis. Its function is as follows. S-adenosyl-L-methionine-dependent transferase that acts as a component of the wybutosine biosynthesis pathway. Wybutosine is a hyper modified guanosine with a tricyclic base found at the 3'-position adjacent to the anticodon of eukaryotic phenylalanine tRNA. Catalyzes the transfer of the alpha-amino-alpha-carboxypropyl (acp) group from S-adenosyl-L-methionine to the C-7 position of 4-demethylwyosine (imG-14) to produce wybutosine-86. The polypeptide is tRNA wybutosine-synthesizing protein 2 (trm12) (Schizosaccharomyces pombe (strain 972 / ATCC 24843) (Fission yeast)).